Here is a 1115-residue protein sequence, read N- to C-terminus: Integrin alpha-PS3 (1115 aa).

The first 24 residues, Met1–Ala24, serve as a signal peptide directing secretion. Residues Phe25–Thr1054 are Extracellular-facing. 7 FG-GAP repeats span residues Lys39–Pro99, Ser113–Gln174, Asp193–Pro246, Ile278–Ile335, His336–Glu397, Arg398–Asp453, and Asp460–Arg522. Asn46, Asn82, and Asn166 each carry an N-linked (GlcNAc...) asparagine glycan. Asn438 is a glycosylation site (N-linked (GlcNAc...) asparagine). N-linked (GlcNAc...) asparagine glycans are attached at residues Asn696, Asn845, Asn868, and Asn964. A helical membrane pass occupies residues Gly1055 to Ile1075. At Ser1076–Asn1115 the chain is on the cytoplasmic side.

Belongs to the integrin alpha chain family. Heterodimer of an alpha and a beta subunit. The alpha subunit is composed of a heavy and a light chain linked by a disulfide bond. Interacts with mys/beta-PS and Itgbn. Expressed in embryonic and larval hemocytes (at protein level). Expressed in tissues undergoing invagination, tissue movement and morphogenesis such as salivary gland, trachea, midgut endoderm, dorsal vessel, midline of the ventral nerve cord, amnioserosa and the amnioproctodeal invagination. Expressed in the mushroom body neuropil, brain areas that contain mushroom body processes in synaptic contact with other neurons. In egg chambers, expressed in border cells, in stretch cells and in dorsal appendage primordia.

It localises to the apical cell membrane. The protein localises to the lateral cell membrane. It is found in the cytoplasm. Integrin alpha-PS3/beta-PS is a receptor for laminin. Also binds to wb. Important during embryogenesis for the development of the trachea, dorsal vessel and salivary gland, as well as for dorsal closure. Required for short-term memory processes. Minor involvement in the establishment of the oocyte anterior-posterior length. Plays a role in timely border cell migration during oogenesis, probably mediated by JNK signaling. Integrin alpha-PS3/Itgbn is required for effective phagocytosis of apoptotic cells during embryonic development and for the phagocytic elimination of S.aureus by mediating the binding of S.aureus peptidoglycan to larval hemocytes, which probably activates a signaling pathway involving Rac1 and Rac2. Integrin alpha-PS3/Itgbn also regulates Fak activity during neuromuscular junction (NMJ) growth and is required for its activation in presynapsis of NMJs. Seems to be dispensable for major morphogenetic processes. The chain is Integrin alpha-PS3 (scb) from Drosophila melanogaster (Fruit fly).